A 139-amino-acid polypeptide reads, in one-letter code: Transcription antitermination protein NusB (139 aa).

Belongs to the NusB family.

In terms of biological role, involved in transcription antitermination. Required for transcription of ribosomal RNA (rRNA) genes. Binds specifically to the boxA antiterminator sequence of the ribosomal RNA (rrn) operons. This chain is Transcription antitermination protein NusB, found in Rubrobacter xylanophilus (strain DSM 9941 / JCM 11954 / NBRC 16129 / PRD-1).